A 380-amino-acid polypeptide reads, in one-letter code: Serpin B7 (380 aa).

A phosphoserine mark is found at serine 217 and serine 223.

This sequence belongs to the serpin family. Ov-serpin subfamily. In terms of tissue distribution, predominantly expressed in mesangial cells. Expressed in the epidermis of the whole body.

It localises to the cytoplasm. Functionally, might function as an inhibitor of Lys-specific proteases. Might influence the maturation of megakaryocytes via its action as a serpin. The polypeptide is Serpin B7 (SERPINB7) (Homo sapiens (Human)).